Consider the following 348-residue polypeptide: Competence protein ComGA (348 aa).

145–152 (GATGSGKT) is an ATP binding site.

This sequence belongs to the GSP E family.

It is found in the cell membrane. Functionally, required for uptake of DNA by competent cells. The polypeptide is Competence protein ComGA (comGA) (Halalkalibacterium halodurans (strain ATCC BAA-125 / DSM 18197 / FERM 7344 / JCM 9153 / C-125) (Bacillus halodurans)).